The sequence spans 287 residues: ATP synthase gamma chain (287 aa).

This sequence belongs to the ATPase gamma chain family. In terms of assembly, F-type ATPases have 2 components, CF(1) - the catalytic core - and CF(0) - the membrane proton channel. CF(1) has five subunits: alpha(3), beta(3), gamma(1), delta(1), epsilon(1). CF(0) has three main subunits: a, b and c.

The protein localises to the cell membrane. Functionally, produces ATP from ADP in the presence of a proton gradient across the membrane. The gamma chain is believed to be important in regulating ATPase activity and the flow of protons through the CF(0) complex. The sequence is that of ATP synthase gamma chain from Mycoplasmopsis agalactiae (strain NCTC 10123 / CIP 59.7 / PG2) (Mycoplasma agalactiae).